A 275-amino-acid polypeptide reads, in one-letter code: Trans-aconitate 2-methyltransferase (275 aa).

This sequence belongs to the methyltransferase superfamily. Tam family.

It localises to the cytoplasm. It catalyses the reaction trans-aconitate + S-adenosyl-L-methionine = (E)-3-(methoxycarbonyl)pent-2-enedioate + S-adenosyl-L-homocysteine. Catalyzes the S-adenosylmethionine monomethyl esterification of trans-aconitate. This chain is Trans-aconitate 2-methyltransferase, found in Pseudomonas aeruginosa (strain UCBPP-PA14).